The chain runs to 167 residues: uncharacterized protein (167 aa).

This is an uncharacterized protein from Escherichia coli (strain K12).